Consider the following 380-residue polypeptide: Chaperone protein DnaJ (380 aa).

Residues 5-70 (DYYEALGVAR…RKRTAYDQFG (66 aa)) enclose the J domain. A CR-type zinc finger spans residues 137-215 (GTTAKIRIPT…CRGEGRVREH (79 aa)). 8 residues coordinate Zn(2+): C150, C153, C167, C170, C189, C192, C203, and C206. CXXCXGXG motif repeat units lie at residues 150–157 (CKACEGSG), 167–174 (CPTCGGHG), 189–196 (CPRCHGSG), and 203–210 (CSTCRGEG). Residues 222–247 (IPPGVDTGDRIRLTGEGEAGESGGPP) are disordered.

It belongs to the DnaJ family. Homodimer. The cofactor is Zn(2+).

It localises to the cytoplasm. In terms of biological role, participates actively in the response to hyperosmotic and heat shock by preventing the aggregation of stress-denatured proteins and by disaggregating proteins, also in an autonomous, DnaK-independent fashion. Unfolded proteins bind initially to DnaJ; upon interaction with the DnaJ-bound protein, DnaK hydrolyzes its bound ATP, resulting in the formation of a stable complex. GrpE releases ADP from DnaK; ATP binding to DnaK triggers the release of the substrate protein, thus completing the reaction cycle. Several rounds of ATP-dependent interactions between DnaJ, DnaK and GrpE are required for fully efficient folding. Also involved, together with DnaK and GrpE, in the DNA replication of plasmids through activation of initiation proteins. The chain is Chaperone protein DnaJ from Nitrosococcus oceani (strain ATCC 19707 / BCRC 17464 / JCM 30415 / NCIMB 11848 / C-107).